The chain runs to 115 residues: Phosphoribosyl-AMP cyclohydrolase (115 aa).

Residue D80 coordinates Mg(2+). C81 is a binding site for Zn(2+). D82 and D84 together coordinate Mg(2+). The Zn(2+) site is built by C97 and C104.

This sequence belongs to the PRA-CH family. In terms of assembly, homodimer. Mg(2+) is required as a cofactor. It depends on Zn(2+) as a cofactor.

It is found in the cytoplasm. It carries out the reaction 1-(5-phospho-beta-D-ribosyl)-5'-AMP + H2O = 1-(5-phospho-beta-D-ribosyl)-5-[(5-phospho-beta-D-ribosylamino)methylideneamino]imidazole-4-carboxamide. The protein operates within amino-acid biosynthesis; L-histidine biosynthesis; L-histidine from 5-phospho-alpha-D-ribose 1-diphosphate: step 3/9. Catalyzes the hydrolysis of the adenine ring of phosphoribosyl-AMP. The sequence is that of Phosphoribosyl-AMP cyclohydrolase from Rhodococcus erythropolis (strain PR4 / NBRC 100887).